The chain runs to 598 residues: Elongation factor 4 (598 aa).

The region spanning 4–185 (KNIRNFSIIA…TIIAKIPPPK (182 aa)) is the tr-type G domain. Residues 16 to 21 (DHGKST) and 132 to 135 (NKID) each bind GTP.

It belongs to the TRAFAC class translation factor GTPase superfamily. Classic translation factor GTPase family. LepA subfamily.

It is found in the cell membrane. The catalysed reaction is GTP + H2O = GDP + phosphate + H(+). Its function is as follows. Required for accurate and efficient protein synthesis under certain stress conditions. May act as a fidelity factor of the translation reaction, by catalyzing a one-codon backward translocation of tRNAs on improperly translocated ribosomes. Back-translocation proceeds from a post-translocation (POST) complex to a pre-translocation (PRE) complex, thus giving elongation factor G a second chance to translocate the tRNAs correctly. Binds to ribosomes in a GTP-dependent manner. The protein is Elongation factor 4 of Mycoplasma genitalium (strain ATCC 33530 / DSM 19775 / NCTC 10195 / G37) (Mycoplasmoides genitalium).